A 498-amino-acid chain; its full sequence is MGRKKIQITRIMDERNRQVTFTKRKFGLMKKAYELSVLCDCEIALIIFNSSNKLFQYASTDMDKVLLKYTEYNEPHESRTNSDIVETLRKKGLNGCESPDADDYFEHSPLSEDRFSKLNEDSDFIFKRGPPGLPPQNFSMSVTVPVTSPNALSYTNPGSSLVSPSLAASSTLADSSMLSPPPATLHRNVSPGAPQRPPSTGSASGMLSTTDLTVPNGAGNSPVGNGFVNSRASPNLIGNTGANSLGKVMPTKSPPPPGGGSLGMNSRKPDLRVVIPPSSKGMMPPLSEEEELELNAQRISSSQATQPLATPVVSVTTPSLPPQGLVYSAMPTAYNTDYSLTSADLSALQGFTSPGMLSLGQASAWQQHHLGQAALSSLVAGGQLSQGSNLSINTNQNINIKSEPISPPRDRMTPSGFQQQQQQPQQQPPPQPPQPQPRQEMGRSPVDSLSSSSSSYDGSDREDPRGDFHSPIVLGRPPNTEDRESPSVKRMRMDTWVT.

In terms of domain architecture, MADS-box spans 3-57 (RKKIQITRIMDERNRQVTFTKRKFGLMKKAYELSVLCDCEIALIIFNSSNKLFQY). Positions 58-86 (ASTDMDKVLLKYTEYNEPHESRTNSDIVE) form a DNA-binding region, mef2-type. Ser59 is modified (phosphoserine; by CK2). Ser98 and Ser108 each carry phosphoserine. At Ser108 the chain carries Phosphothreonine. The segment at 172-220 (LADSSMLSPPPATLHRNVSPGAPQRPPSTGSASGMLSTTDLTVPNGAGN) is disordered. Over residues 198–220 (PSTGSASGMLSTTDLTVPNGAGN) the composition is skewed to polar residues. Position 233 is a phosphoserine (Ser233). The segment at 240 to 268 (TGANSLGKVMPTKSPPPPGGGSLGMNSRK) is disordered. Position 247 is an N6-acetyllysine (Lys247). A Phosphoserine modification is found at Ser253. The required for interaction with MAPKs stretch occupies residues 264-281 (MNSRKPDLRVVIPPSSKG). A beta domain region spans residues 287-294 (SEEEELEL). A phosphothreonine; by MAPK7 mark is found at Thr310 and Thr317. Thr310 carries the phosphothreonine; by NLK modification. The residue at position 353 (Ser353) is a Phosphoserine; by MAPK7. The segment covering 388–400 (SNLSINTNQNINI) has biased composition (polar residues). Positions 388–498 (SNLSINTNQN…KRMRMDTWVT (111 aa)) are disordered. Lys401 carries the N6-acetyllysine; alternate modification. Lys401 is covalently cross-linked (Glycyl lysine isopeptide (Lys-Gly) (interchain with G-Cter in SUMO); alternate). Residue Ser406 is modified to Phosphoserine. A Phosphothreonine modification is found at Thr413. Positions 426–436 (QQPPPQPPQPQ) are enriched in pro residues. Ser444 carries the post-translational modification Phosphoserine. Residues 444 to 457 (SPVDSLSSSSSSYD) show a composition bias toward low complexity. Basic and acidic residues-rich tracts occupy residues 458–468 (GSDREDPRGDF) and 479–498 (NTED…TWVT).

Belongs to the MEF2 family. In terms of assembly, binds DNA as a homo- or heterodimer. Dimerizes with MEF2D. Interacts with HDAC7. Interacts with PIAS1; the interaction enhances sumoylation. Interacts with HDAC4, HDAC9 and SLC2A4RG. Interacts (via the N-terminal) with MAPK7; the interaction results in the phosphorylation and transcriptional activity of MEF2A. Post-translationally, constitutive phosphorylation on Ser-406 promotes Lys-401 sumoylation thus preventing acetylation at this site. Dephosphorylation on Ser-406 by PPP3CA upon neuron depolarization promotes a switch from sumoylation to acetylation on residue Lys-403 leading to inhibition of dendrite claw differentiation. Phosphorylation on Thr-312 and Thr-319 are the main sites involved in p38 MAPK signaling and activate transcription. Phosphorylated on these sites by MAPK14/p38alpha and MAPK11/p38beta, but not by MAPK13/p38delta nor by MAPK12/p38gamma. Phosphorylation on Ser-408 by CDK5 induced by neurotoxicity inhibits MEF2A transcriptional activation leading to apoptosis of cortical neurons. Phosphorylation on Thr-312, Thr-319 and Ser-355 can be induced by EGF. Isoform 3 is phosphorylated on Ser-98 and Thr-108. In terms of processing, sumoylation on Lys-401 is enhanced by PIAS1 and represses transcriptional activity. Phosphorylation on Ser-406 is required for sumoylation. Has no effect on nuclear location nor on DNA binding. Sumoylated with SUMO1 and, to a lesser extent with SUMO2 and SUMO3. PIASx facilitates sumoylation in postsynaptic dendrites in the cerebellar cortex and promotes their morphogenesis. Acetylation on Lys-401 activates transcriptional activity. Acetylated by p300 on several sites in diffentiating myocytes. Acetylation on Lys-4 increases DNA binding and transactivation. Hyperacetylation by p300 leads to enhanced cardiac myocyte growth and heart failure. Post-translationally, proteolytically cleaved in cerebellar granule neurons on several sites by caspase 3 and caspase 7 following neurotoxicity. Preferentially cleaves the CDK5-mediated hyperphosphorylated form which leads to neuron apoptosis and transcriptional inactivation. Widely expressed though mainly restricted to skeletal and cardiac muscle, brain, neurons and lymphocytes. Differentially expressed depending on if isoforms contain the beta domain or not, with the total expression of the beta domain-lacking isoforms vastly exceeding that of the beta domain-containing isoforms. Isoforms containing the beta domain are expressed primarily in skeletal and cardiac muscle and in brain. Also present in lung and testis. Splicing to include the beta domain is induced in differentiating myocytes. Isoforms lacking the beta domain are expressed less abundantly in skeletal muscle, brain and lymphocytes, and are uniquely found in ovary, liver, spleen and kidney. In embryos, the beta domain-containing and beta domain-lacking isoforms are equally expressed. Also expressed cerebellar granule neurons and other regions of the CNS. Highest levels in the olfactory bulb, cortex, hippocampus, thalamus and cerebellum.

The protein localises to the nucleus. Its function is as follows. Transcriptional activator which binds specifically to the MEF2 element, 5'-YTA[AT](4)TAR-3', found in numerous muscle-specific genes. Also involved in the activation of numerous growth factor- and stress-induced genes. Mediates cellular functions not only in skeletal and cardiac muscle development, but also in neuronal differentiation and survival. Plays diverse roles in the control of cell growth, survival and apoptosis via p38 MAPK signaling in muscle-specific and/or growth factor-related transcription. In cerebellar granule neurons, phosphorylated and sumoylated MEF2A represses transcription of NUR77 promoting synaptic differentiation. Associates with chromatin to the ZNF16 promoter. This is Myocyte-specific enhancer factor 2A (Mef2a) from Mus musculus (Mouse).